Reading from the N-terminus, the 863-residue chain is Oleate activated transcription factor 3 (863 aa).

Positions 19 to 47 (CTNCKKRKSKCDRTKPCGTCVRLGDVDSC) form a DNA-binding region, zn(2)-C6 fungal-type. Positions 52-63 (DSSGQPESSPSL) are enriched in polar residues. Residues 52 to 99 (DSSGQPESSPSLNDADPLRKQSTPAERISPGFIKKRRSSQTRQDEDHW) form a disordered region.

It belongs to the OAF3 family.

It localises to the cytoplasm. The protein resides in the nucleus. Its subcellular location is the mitochondrion. In terms of biological role, transcriptional inhibitor with a significantly increased number of target genes in response to oleate. The polypeptide is Oleate activated transcription factor 3 (OAF3) (Saccharomyces cerevisiae (strain YJM789) (Baker's yeast)).